Reading from the N-terminus, the 238-residue chain is Tyrosine recombinase XerD-like (238 aa).

A Core-binding (CB) domain is found at 1–75 (MKLPNEIDEY…SANQYLLFLY (75 aa)). Positions 90–238 (VQKKSQTAQS…TITTLEKYYR (149 aa)) constitute a Tyr recombinase domain. Catalysis depends on residues Lys-154 and Arg-204. Residue Tyr-236 is the O-(3'-phospho-DNA)-tyrosine intermediate of the active site.

Belongs to the 'phage' integrase family. XerD-like subfamily.

The protein localises to the cytoplasm. In terms of biological role, putative tyrosine recombinase. Not involved in the cutting and rejoining of the recombining DNA molecules on dif(SL) site. The sequence is that of Tyrosine recombinase XerD-like (ynbA) from Lactococcus lactis subsp. lactis (strain IL1403) (Streptococcus lactis).